The primary structure comprises 417 residues: Methyltransferase/ribosomally synthesized cyclic peptide dendrothelin A precursor dbihMA (417 aa).

A methyltransferase domain region spans residues 1-251 (MESSTQTKPG…GVSTFYIPPK (251 aa)). Active-site residues include Arg72, Tyr76, and Tyr98. Positions 98, 100, 103, 130, 172, 213, 244, and 245 each coordinate S-adenosyl-L-methionine. Residues 252 to 378 (ARKDINTDII…WAIRCAMKNM (127 aa)) are clasp domain. The precursor leader stretch occupies residues 379–399 (PSSLLEAASQSVEEASMNGFP). Val401 and Val403 each carry N-methylvaline. N-methylthreonine is present on Thr404. Gly405 carries the post-translational modification N-methylglycine. N-methylisoleucine is present on Ile406. At Val407 the chain carries N-methylvaline. Residue Gly408 is modified to N-methylglycine. An N-methylisoleucine modification is found at Ile410. Gly411 carries the N-methylglycine modification. Val413 carries the post-translational modification N-methylvaline.

The protein in the N-terminal section; belongs to the precorrin methyltransferase family. As to quaternary structure, homodimer. DbiMA automethylates at Val-401, Val-403, Thr-404, Gly-405, Ile-406, Val-407, Gly-408, Ile-410, Gly-411 and Val-413 before being processed by the prolyloligopeptidase dbiP which likely forms a peptidyl ester upon removal of the follower propeptide, which then undergoes macrocyclization with the N-terminus of the modified core peptide. Peptide backbone alpha-N-methylations change the physicochemical properties of amide bonds to provide structural constraints and other favorable characteristics including biological membrane permeability to peptides.

Its pathway is mycotoxin biosynthesis. In terms of biological role, fusion protein of the methyltransferase dbiM and the dendrothelin core peptide; part of the gene cluster that mediates the biosynthesis of dendrothelin A, a highly methylated cyclic dodecapeptide showing slight nematodicidal activity. Dendrothelin A derives from the C-terminus of the dbiMA protein, and it is the dbiMA protein that methylates its own C-terminus using S-adenosyl methionine (SAM). The C-terminus is subsequently cleaved off and macrocyclized by the prolyloligopeptidase dbiP to give the final product. In Dendrothele bispora (strain CBS 962.96), this protein is Methyltransferase/ribosomally synthesized cyclic peptide dendrothelin A precursor dbihMA.